A 434-amino-acid polypeptide reads, in one-letter code: UPF0597 protein CLK_1462 (434 aa).

The protein belongs to the UPF0597 family.

The protein is UPF0597 protein CLK_1462 of Clostridium botulinum (strain Loch Maree / Type A3).